The sequence spans 202 residues: Recombination protein RecR (202 aa).

Residues 58-73 form a C4-type zinc finger; the sequence is CANCGNLTDKKLCDIC. Residues 81 to 178 enclose the Toprim domain; it reads SVITVVEDSM…KVSRIAMGVP (98 aa).

This sequence belongs to the RecR family.

Functionally, may play a role in DNA repair. It seems to be involved in an RecBC-independent recombinational process of DNA repair. It may act with RecF and RecO. The protein is Recombination protein RecR of Finegoldia magna (strain ATCC 29328 / DSM 20472 / WAL 2508) (Peptostreptococcus magnus).